A 489-amino-acid chain; its full sequence is CBL-interacting serine/threonine-protein kinase 12 (489 aa).

A Protein kinase domain is found at Tyr-26–Phe-280. Residues Leu-32–Val-40 and Lys-55 contribute to the ATP site. The active-site Proton acceptor is the Asp-148. Positions Asp-166–Glu-195 are activation loop. Residue Ser-170 is modified to Phosphoserine. Thr-184 is modified (phosphothreonine). Positions Pro-336–Asp-360 constitute an NAF domain. A PPI region spans residues Gly-363–Val-392.

Belongs to the protein kinase superfamily. CAMK Ser/Thr protein kinase family. SNF1 subfamily. As to quaternary structure, interacts with CBL2 and CBL3. The cofactor is Mn(2+). In terms of tissue distribution, expressed in roots and shoots.

The catalysed reaction is L-seryl-[protein] + ATP = O-phospho-L-seryl-[protein] + ADP + H(+). It catalyses the reaction L-threonyl-[protein] + ATP = O-phospho-L-threonyl-[protein] + ADP + H(+). Its function is as follows. CIPK serine-threonine protein kinases interact with CBL proteins. Binding of a CBL protein to the regulatory NAF domain of CIPK protein lead to the activation of the kinase in a calcium-dependent manner. The polypeptide is CBL-interacting serine/threonine-protein kinase 12 (CIPK12) (Arabidopsis thaliana (Mouse-ear cress)).